Reading from the N-terminus, the 248-residue chain is Phosphatidylserine decarboxylase proenzyme (248 aa).

Ser-206 acts as the Schiff-base intermediate with substrate; via pyruvic acid in catalysis. Residue Ser-206 is modified to Pyruvic acid (Ser); by autocatalysis.

Belongs to the phosphatidylserine decarboxylase family. PSD-A subfamily. In terms of assembly, heterodimer of a large membrane-associated beta subunit and a small pyruvoyl-containing alpha subunit. Pyruvate is required as a cofactor. Post-translationally, is synthesized initially as an inactive proenzyme. Formation of the active enzyme involves a self-maturation process in which the active site pyruvoyl group is generated from an internal serine residue via an autocatalytic post-translational modification. Two non-identical subunits are generated from the proenzyme in this reaction, and the pyruvate is formed at the N-terminus of the alpha chain, which is derived from the carboxyl end of the proenzyme. The post-translation cleavage follows an unusual pathway, termed non-hydrolytic serinolysis, in which the side chain hydroxyl group of the serine supplies its oxygen atom to form the C-terminus of the beta chain, while the remainder of the serine residue undergoes an oxidative deamination to produce ammonia and the pyruvoyl prosthetic group on the alpha chain.

It is found in the cell membrane. The enzyme catalyses a 1,2-diacyl-sn-glycero-3-phospho-L-serine + H(+) = a 1,2-diacyl-sn-glycero-3-phosphoethanolamine + CO2. The protein operates within phospholipid metabolism; phosphatidylethanolamine biosynthesis; phosphatidylethanolamine from CDP-diacylglycerol: step 2/2. Its function is as follows. Catalyzes the formation of phosphatidylethanolamine (PtdEtn) from phosphatidylserine (PtdSer). The chain is Phosphatidylserine decarboxylase proenzyme from Nitrobacter hamburgensis (strain DSM 10229 / NCIMB 13809 / X14).